The chain runs to 345 residues: UDP-3-O-acylglucosamine N-acyltransferase (345 aa).

His-239 acts as the Proton acceptor in catalysis.

It belongs to the transferase hexapeptide repeat family. LpxD subfamily. As to quaternary structure, homotrimer.

The enzyme catalyses a UDP-3-O-[(3R)-3-hydroxyacyl]-alpha-D-glucosamine + a (3R)-hydroxyacyl-[ACP] = a UDP-2-N,3-O-bis[(3R)-3-hydroxyacyl]-alpha-D-glucosamine + holo-[ACP] + H(+). It participates in bacterial outer membrane biogenesis; LPS lipid A biosynthesis. Catalyzes the N-acylation of UDP-3-O-acylglucosamine using 3-hydroxyacyl-ACP as the acyl donor. Is involved in the biosynthesis of lipid A, a phosphorylated glycolipid that anchors the lipopolysaccharide to the outer membrane of the cell. The chain is UDP-3-O-acylglucosamine N-acyltransferase from Geobacter metallireducens (strain ATCC 53774 / DSM 7210 / GS-15).